We begin with the raw amino-acid sequence, 122 residues long: Glycine cleavage system H protein (122 aa).

Residues 19-101 (TATIGITKHA…EGNSWLYKIK (83 aa)) form the Lipoyl-binding domain. An N6-lipoyllysine modification is found at K60.

Belongs to the GcvH family. The glycine cleavage system is composed of four proteins: P, T, L and H. It depends on (R)-lipoate as a cofactor.

The glycine cleavage system catalyzes the degradation of glycine. The H protein shuttles the methylamine group of glycine from the P protein to the T protein. The polypeptide is Glycine cleavage system H protein (Dinoroseobacter shibae (strain DSM 16493 / NCIMB 14021 / DFL 12)).